Here is a 410-residue protein sequence, read N- to C-terminus: Voltage-dependent chloride channel 2, chloroplastic (410 aa).

The Lumenal, thylakoid segment spans residues 1–110 (MYQSMNLSFS…RHVSSSPSSR (110 aa)). A helical transmembrane segment spans residues 111–131 (VILSLIPPVFFFTTVAILIAG). Topologically, residues 132–147 (YNSAVDLDWLPDFFPV) are stromal. A helical membrane pass occupies residues 148–168 (LRASPLPYQLTAPALALLLVF). At 169–315 (RTEASYSRFE…PLSYTRLTSR (147 aa)) the chain is on the lumenal, thylakoid side. 2 helical membrane passes run 316 to 336 (FLVL…HWNV) and 337 to 357 (VPAT…GVLI). The Lumenal, thylakoid portion of the chain corresponds to 358 to 410 (EEPFSMLALDELCAMVLSNSDEAVESKEVIRNRIIAKKRILEIKHSSNGWHKS).

It belongs to the anion channel-forming bestrophin (TC 1.A.46) family. Voltage-dependent chloride channel subfamily. As to expression, mostly expressed in flowers and, to a lower extent, in leaves, stems and roots.

The protein localises to the plastid. Its subcellular location is the chloroplast thylakoid membrane. The enzyme catalyses chloride(in) = chloride(out). In terms of biological role, voltage-dependent chloride (Cl) channel probably contributing to proton motive force (PMF) partitioning across the thylakoid membrane by anion influx into the lumen. Influences thylakoid ultrastructure, including lumen size and organization. The sequence is that of Voltage-dependent chloride channel 2, chloroplastic from Arabidopsis thaliana (Mouse-ear cress).